The chain runs to 249 residues: INO80 complex subunit 1 (249 aa).

2 C2H2-type zinc fingers span residues 73–100 and 106–131; these read YTCE…LRSH and FICS…RTVH.

As to quaternary structure, component of the INO80 chromatin remodeling complex.

The protein localises to the nucleus. It is found in the cytoplasm. Its function is as follows. Component of the INO80 complex which remodels chromatin by shifting nucleosomes and is involved in DNA repair. The protein is INO80 complex subunit 1 (iec1) of Schizosaccharomyces pombe (strain 972 / ATCC 24843) (Fission yeast).